Consider the following 659-residue polypeptide: Mannosyl-oligosaccharide 1,2-alpha-mannosidase IA (659 aa).

Residues 1 to 48 are Cytoplasmic-facing; it reads MPVGGLLPLFSSPAGGGLGGGLGGGLGGGGGGGGRKGSGPSAFRLTEK. A helical; Signal-anchor for type II membrane protein membrane pass occupies residues 49–69; sequence FVLLLVFSAFITLCFGAIFFL. Residues 70–659 lie on the Lumenal side of the membrane; that stretch reads PDSSKLLSGV…NIKKVEDNEK (590 aa). Positions 88–121 are disordered; it reads QPAADHKPGPGARAEDAADGRARPGEEGAPGDPA. Residues 91-113 show a composition bias toward basic and acidic residues; sequence ADHKPGPGARAEDAADGRARPGE. A disulfide bond links Cys482 and Cys514. Glu528 serves as the catalytic Proton donor. Position 639 (Thr639) interacts with Ca(2+).

The protein belongs to the glycosyl hydrolase 47 family. Ca(2+) serves as cofactor.

Its subcellular location is the endoplasmic reticulum membrane. The catalysed reaction is N(4)-(alpha-D-Man-(1-&gt;2)-alpha-D-Man-(1-&gt;2)-alpha-D-Man-(1-&gt;3)-[alpha-D-Man-(1-&gt;2)-alpha-D-Man-(1-&gt;3)-[alpha-D-Man-(1-&gt;2)-alpha-D-Man-(1-&gt;6)]-alpha-D-Man-(1-&gt;6)]-beta-D-Man-(1-&gt;4)-beta-D-GlcNAc-(1-&gt;4)-beta-D-GlcNAc)-L-asparaginyl-[protein] (N-glucan mannose isomer 9A1,2,3B1,2,3) + 4 H2O = N(4)-(alpha-D-Man-(1-&gt;3)-[alpha-D-Man-(1-&gt;3)-[alpha-D-Man-(1-&gt;6)]-alpha-D-Man-(1-&gt;6)]-beta-D-Man-(1-&gt;4)-beta-D-GlcNAc-(1-&gt;4)-beta-D-GlcNAc)-L-asparaginyl-[protein] (N-glucan mannose isomer 5A1,2) + 4 beta-D-mannose. The enzyme catalyses N(4)-(alpha-D-Man-(1-&gt;2)-alpha-D-Man-(1-&gt;2)-alpha-D-Man-(1-&gt;3)-[alpha-D-Man-(1-&gt;3)-[alpha-D-Man-(1-&gt;2)-alpha-D-Man-(1-&gt;6)]-alpha-D-Man-(1-&gt;6)]-beta-D-Man-(1-&gt;4)-beta-D-GlcNAc-(1-&gt;4)-beta-D-GlcNAc)-L-asparaginyl-[protein] (N-glucan mannose isomer 8A1,2,3B1,3) + 3 H2O = N(4)-(alpha-D-Man-(1-&gt;3)-[alpha-D-Man-(1-&gt;3)-[alpha-D-Man-(1-&gt;6)]-alpha-D-Man-(1-&gt;6)]-beta-D-Man-(1-&gt;4)-beta-D-GlcNAc-(1-&gt;4)-beta-D-GlcNAc)-L-asparaginyl-[protein] (N-glucan mannose isomer 5A1,2) + 3 beta-D-mannose. It functions in the pathway protein modification; protein glycosylation. With respect to regulation, inhibited by both 1-deoxymannojirimycin and kifunensine. In terms of biological role, involved in the maturation of Asn-linked oligosaccharides. Progressively trim alpha-1,2-linked mannose residues from Man(9)GlcNAc(2) to produce Man(5)GlcNAc(2). This chain is Mannosyl-oligosaccharide 1,2-alpha-mannosidase IA (MAN1A1), found in Sus scrofa (Pig).